The following is a 224-amino-acid chain: MKSRNREMFKVGPIGSKQYYDKSWEEKGRNMISSIYVAFNKDSIKCIQFSYFHNGVHVVSEKHGSSKGQSYEIVRLNDDEYVTGLSGIFWERKVTSLTFHTNQGKHGPFCNGTGYSSSYMADYKKEIDVKIRDRREFGGFFGSFDDEFDGLTSIGIYVYPTYDNKPTLNQAWDPLYAFAHNQIPTIADGIPVMHIRYKPKLKDRIFSKLDFKRAMLCLIKVFLD.

The region spanning 8-160 (MFKVGPIGSK…LTSIGIYVYP (153 aa)) is the Jacalin-type lectin domain.

This sequence belongs to the jacalin lectin family.

The protein is Jacalin-related lectin 24 (JAL24) of Arabidopsis thaliana (Mouse-ear cress).